A 702-amino-acid chain; its full sequence is Polyphosphate kinase (702 aa).

Residue Asn-55 participates in ATP binding. Mg(2+) is bound by residues Arg-389 and Arg-419. His-449 functions as the Phosphohistidine intermediate in the catalytic mechanism. ATP-binding residues include Tyr-482, Arg-578, and His-606.

This sequence belongs to the polyphosphate kinase 1 (PPK1) family. Mg(2+) is required as a cofactor. An intermediate of this reaction is the autophosphorylated ppk in which a phosphate is covalently linked to a histidine residue through a N-P bond.

The enzyme catalyses [phosphate](n) + ATP = [phosphate](n+1) + ADP. Functionally, catalyzes the reversible transfer of the terminal phosphate of ATP to form a long-chain polyphosphate (polyP). The protein is Polyphosphate kinase of Bacillus cereus (strain ATCC 14579 / DSM 31 / CCUG 7414 / JCM 2152 / NBRC 15305 / NCIMB 9373 / NCTC 2599 / NRRL B-3711).